The following is a 151-amino-acid chain: Trivalent organoarsenical cleaving enzyme (151 aa).

The region spanning Ser-2–Val-118 is the VOC domain. Fe(2+) is bound at residue Gln-5. Asp-61 lines the roxarsone (III) pocket. Fe(2+) is bound at residue His-62. The roxarsone (III) site is built by Cys-95 and Cys-96. A Fe(2+)-binding site is contributed by Glu-114.

Monomer. Fe(2+) serves as cofactor.

It carries out the reaction methylarsonous acid + AH2 + O2 = arsenite + methanol + A + H(+). It catalyses the reaction roxarsone (III) + AH2 + O2 = 4-hydroxy-3-nitrocyclohexa-2,5-dien-1-one + arsenite + A + H(+). The catalysed reaction is nitarsone (III) + AH2 + O2 = 4-nitrocyclohexa-2,5-dien-1-one + arsenite + A + H(+). The enzyme catalyses 4-aminophenylarsonous acid + AH2 + O2 = 4-aminocyclohexa-2,5-dien-1-one + arsenite + A. Nonheme iron-dependent dioxygenase that can break carbon-arsenic bonds, playing a role in the detoxification of environmental organoarsenical compounds. Catalyzes the oxygen-dependent demethylation of highly toxic methylarsonous acid (MAs(III)) to arsenite, which can then be exported out of the cell. Can also cleave the C-As bond in several trivalent aromatic arsenicals, including roxarsone (III), nitarsone (III) and (4-aminophenyl)arsonous acid. Organoarsenical degradation by this enzyme is proposed to have a significant impact on the arsenic biogeocycle that maintains a balance between organic and inorganic species. This is Trivalent organoarsenical cleaving enzyme from Thermomonospora curvata (strain ATCC 19995 / DSM 43183 / JCM 3096 / KCTC 9072 / NBRC 15933 / NCIMB 10081 / Henssen B9).